A 336-amino-acid chain; its full sequence is Biotin synthase (336 aa).

Residues 36–263 (TKVQISTLLS…ESHVRLAAGR (228 aa)) form the Radical SAM core domain. [4Fe-4S] cluster contacts are provided by C51, C55, and C58. Residues C95, C126, C186, and R258 each coordinate [2Fe-2S] cluster.

Belongs to the radical SAM superfamily. Biotin synthase family. In terms of assembly, homodimer. Requires [4Fe-4S] cluster as cofactor. [2Fe-2S] cluster serves as cofactor.

It catalyses the reaction (4R,5S)-dethiobiotin + (sulfur carrier)-SH + 2 reduced [2Fe-2S]-[ferredoxin] + 2 S-adenosyl-L-methionine = (sulfur carrier)-H + biotin + 2 5'-deoxyadenosine + 2 L-methionine + 2 oxidized [2Fe-2S]-[ferredoxin]. The protein operates within cofactor biosynthesis; biotin biosynthesis; biotin from 7,8-diaminononanoate: step 2/2. Functionally, catalyzes the conversion of dethiobiotin (DTB) to biotin by the insertion of a sulfur atom into dethiobiotin via a radical-based mechanism. The sequence is that of Biotin synthase from Gluconobacter oxydans (strain 621H) (Gluconobacter suboxydans).